The primary structure comprises 242 residues: RNA polymerase sigma factor for flagellar operon (242 aa).

The Polymerase core binding motif lies at 55–68 (DMQQIGLIALVEAG). A DNA-binding region (H-T-H motif) is located at residues 211–230 (LHEIALVLDLTPPRICQLHK).

Belongs to the sigma-70 factor family.

Its function is as follows. Sigma factors are initiation factors that promote the attachment of RNA polymerase to specific initiation sites and are then released. This alternative sigma factor is specific for the flagellin gene (fliC) expression. The chain is RNA polymerase sigma factor for flagellar operon (lafS) from Vibrio parahaemolyticus serotype O3:K6 (strain RIMD 2210633).